We begin with the raw amino-acid sequence, 585 residues long: Glycerol-3-phosphate dehydrogenase 2 (585 aa).

37–65 (DVVVIGGGVVGSGCALDAATRGLKVALVE) is a binding site for FAD.

The protein belongs to the FAD-dependent glycerol-3-phosphate dehydrogenase family. The cofactor is FAD.

The protein resides in the cytoplasm. It catalyses the reaction a quinone + sn-glycerol 3-phosphate = dihydroxyacetone phosphate + a quinol. This is Glycerol-3-phosphate dehydrogenase 2 (glpD2) from Mycobacterium bovis (strain ATCC BAA-935 / AF2122/97).